We begin with the raw amino-acid sequence, 212 residues long: Probable GTP-binding protein EngB (212 aa).

Residues 38–210 (SLPEIAFVGK…KASLAKCIKP (173 aa)) enclose the EngB-type G domain. GTP contacts are provided by residues 46–53 (GKSNVGKS), 73–77 (GRTRQ), 91–94 (DLPG), 158–161 (TKSD), and 189–191 (VSN). 2 residues coordinate Mg(2+): Ser53 and Thr75.

Belongs to the TRAFAC class TrmE-Era-EngA-EngB-Septin-like GTPase superfamily. EngB GTPase family. Requires Mg(2+) as cofactor.

Necessary for normal cell division and for the maintenance of normal septation. This is Probable GTP-binding protein EngB from Rickettsia peacockii (strain Rustic).